A 351-amino-acid chain; its full sequence is uncharacterized protein (351 aa).

The disordered stretch occupies residues Met1 to Arg61. Basic and acidic residues-rich tracts occupy residues Phe16–Asp38 and Arg44–Arg61.

The protein belongs to the class IV-like SAM-binding methyltransferase superfamily. RNA methyltransferase TrmH family.

This is an uncharacterized protein from Haemophilus influenzae (strain ATCC 51907 / DSM 11121 / KW20 / Rd).